A 109-amino-acid polypeptide reads, in one-letter code: Nucleoid-associated protein Plut_1285 (109 aa).

It belongs to the YbaB/EbfC family. As to quaternary structure, homodimer.

Its subcellular location is the cytoplasm. It localises to the nucleoid. Binds to DNA and alters its conformation. May be involved in regulation of gene expression, nucleoid organization and DNA protection. This Chlorobium luteolum (strain DSM 273 / BCRC 81028 / 2530) (Pelodictyon luteolum) protein is Nucleoid-associated protein Plut_1285.